The following is a 291-amino-acid chain: Urease accessory protein UreD (291 aa).

This sequence belongs to the UreD family. As to quaternary structure, ureD, UreF and UreG form a complex that acts as a GTP-hydrolysis-dependent molecular chaperone, activating the urease apoprotein by helping to assemble the nickel containing metallocenter of UreC. The UreE protein probably delivers the nickel.

The protein localises to the cytoplasm. In terms of biological role, required for maturation of urease via the functional incorporation of the urease nickel metallocenter. The polypeptide is Urease accessory protein UreD (Acinetobacter baumannii (strain ATCC 17978 / DSM 105126 / CIP 53.77 / LMG 1025 / NCDC KC755 / 5377)).